Consider the following 188-residue polypeptide: MYPKRIDIIKKIVENVGEKEIIVSNIGIPSKELYYVKDRERNFYMLGSMGLASSIGLGLALNCEDKVIVIDGDGSILMNLGSLSTIGYMNPKNYILVIIDNSAYGSTGNQKTHTGKNTNLEEIAKGCGLDTITTESLEEFEKEFKNALNEEKCKVIIAKTIPYNEKCSNIEIPPVVLKYRFMEAIKRS.

Belongs to the TPP enzyme family. In terms of assembly, heterododecamer composed of 6 subunits alpha and 6 subunits beta. It depends on thiamine diphosphate as a cofactor.

The enzyme catalyses 3-sulfopyruvate + H(+) = sulfoacetaldehyde + CO2. It participates in cofactor biosynthesis; coenzyme M biosynthesis; sulfoacetaldehyde from phosphoenolpyruvate and sulfite: step 4/4. Inhibited by oxygen when heated in air at 80 degrees Celsius. The enzyme is reactivated by addition of dithionite. Its function is as follows. Involved in the biosynthesis of the coenzyme M (2-mercaptoethanesulfonic acid). Catalyzes the decarboxylation of sulfopyruvate to sulfoacetaldehyde. The chain is Sulfopyruvate decarboxylase subunit beta from Methanocaldococcus jannaschii (strain ATCC 43067 / DSM 2661 / JAL-1 / JCM 10045 / NBRC 100440) (Methanococcus jannaschii).